A 362-amino-acid chain; its full sequence is Mitochondrial distribution and morphology protein 12 (362 aa).

Residues 1–361 (MSFDINWSQL…WPSWLCFDMS (361 aa)) form the SMP-LTD domain. 2 disordered regions span residues 65 to 141 (DFYE…AATP) and 170 to 207 (TPSG…SKRG). Polar residues-rich tracts occupy residues 106–119 (VTLS…TQFA) and 170–187 (TPSG…MRTG). Residues 192–201 (PISNTPISSS) show a composition bias toward low complexity.

Belongs to the MDM12 family. Component of the ER-mitochondria encounter structure (ERMES) or MDM complex, composed of MMM1, MDM10, MDM12 and MDM34. An MMM1 homodimer associates with one molecule of MDM12 on each side in a pairwise head-to-tail manner, and the SMP-LTD domains of MMM1 and MDM12 generate a continuous hydrophobic tunnel for phospholipid trafficking.

It localises to the mitochondrion outer membrane. Its subcellular location is the endoplasmic reticulum membrane. Functionally, component of the ERMES/MDM complex, which serves as a molecular tether to connect the endoplasmic reticulum (ER) and mitochondria. Components of this complex are involved in the control of mitochondrial shape and protein biogenesis, and function in nonvesicular lipid trafficking between the ER and mitochondria. MDM12 is required for the interaction of the ER-resident membrane protein MMM1 and the outer mitochondrial membrane-resident beta-barrel protein MDM10. The MDM12-MMM1 subcomplex functions in the major beta-barrel assembly pathway that is responsible for biogenesis of all mitochondrial outer membrane beta-barrel proteins, and acts in a late step after the SAM complex. The MDM10-MDM12-MMM1 subcomplex further acts in the TOM40-specific pathway after the action of the MDM12-MMM1 complex. Essential for establishing and maintaining the structure of mitochondria and maintenance of mtDNA nucleoids. The protein is Mitochondrial distribution and morphology protein 12 of Meyerozyma guilliermondii (strain ATCC 6260 / CBS 566 / DSM 6381 / JCM 1539 / NBRC 10279 / NRRL Y-324) (Yeast).